Reading from the N-terminus, the 88-residue chain is Small ribosomal subunit protein uS17 (88 aa).

It belongs to the universal ribosomal protein uS17 family. In terms of assembly, part of the 30S ribosomal subunit.

One of the primary rRNA binding proteins, it binds specifically to the 5'-end of 16S ribosomal RNA. In Yersinia pseudotuberculosis serotype O:1b (strain IP 31758), this protein is Small ribosomal subunit protein uS17.